Reading from the N-terminus, the 1060-residue chain is MDWHSFRIAALLLTSLVVLEVNSEFQIQVRDHNAKNGTIKWHSIRRQKREWIKFAAACREGEDNSKRNPIAKIHSDCAANQPVTYRISGVGIDQPPYGIFIINQKTGEINITSIVDREVTPFFIIYCRALNAQGQDLENPLELRVRVMDINDNPPVFSMTTFLGQIEENSNANTLVMKLNATDADEPNNLNSMIAFKIIRQEPSDSPMFIINRKTGEIRTMNNFLDREQYSQYSLVVRGSDRDGGADGMSAESECSITILDVNDNIPYLEQSSYDIEIEENALHSQLVQIRVIDLDEEFSDNWKAIIFFISGNEGNWFEIEMNERTNVGTLKVVKPLDYEAMKNLQLSIGVRNVAEFHQSIISQYRLTATMVTVTVLNVIEGSVFRPGSKTFVVDSRMEANHRVGEFVATDLDTGRASTNVRYEMGNNPENLLVVDSRTGIITLRNRVTMEQYQRLNGEYKGTVLSIDDSLQRTCTGTIVIELSGTGWVPGSDGGGSSSGSGGNRDPVTNGYQGTSTVGPQRVTGSGGVTSSGGGSGVNNTPGRQNPLDEPEPEPFDITEDNVHFGPAGIGLLIMGFLVLGLVPFLLICCDCGGAPGGGAGFEPVPECSDGAIHTWAIEGPQPEPHDGITTICVPQMPPGNANVIEYIDNSGVYTNEYCGREMQDLGGGERTTGFELMDGVKTSAAPEICQEYSGTLRRNSMRECRDGGLNMNFMESYFCQKAYAYADEDEGRPSNDCLLIYDIEGVGSPAGSVGCCSFIGEDLDESFLDTLGPKFKKLADISLGKEIDSYPDPDSSWPPQSTEPMCPQSTEPLGSGYPPISPHFGTTTVISENAYPSGPGVQHPLPIPDPLGYGNVTVRESYATSGTLKPSVHFHDNQQASNVVVTERVVGPVPGADLHGMLEIPDLRDGTNVIVTERVIAPGSSLPTSLTIPNPRETSNVVVTERVIQPTSGMIGNLSMTPELSSAQNVIVTERVVSGAGMSGIAGTAGLGGVGGIGSSGLVSTTMGAAGTGLNMGGTATIGHMRSSSDHHFSQTIGSASPNMARSRITKYSTVQYSK.

An N-terminal signal peptide occupies residues 1–23 (MDWHSFRIAALLLTSLVVLEVNS). Positions 24–49 (EFQIQVRDHNAKNGTIKWHSIRRQKR) are excised as a propeptide. Cadherin domains follow at residues 50–157 (EWIK…PPVF), 158–269 (SMTT…IPYL), 270–389 (EQSS…RPGS), and 386–493 (RPGS…PGSD). The Extracellular segment spans residues 50–567 (EWIKFAAACR…ITEDNVHFGP (518 aa)). An N-linked (GlcNAc...) (high mannose) asparagine glycan is attached at Asn110. The N-linked (GlcNAc...) asparagine glycan is linked to Asn180. A disordered region spans residues 490-560 (PGSDGGGSSS…PEPEPFDITE (71 aa)). The segment covering 492–503 (SDGGGSSSGSGG) has biased composition (gly residues). Positions 510 to 519 (NGYQGTSTVG) are enriched in polar residues. The segment covering 525 to 537 (GSGGVTSSGGGSG) has biased composition (gly residues). Residues 549–560 (DEPEPEPFDITE) are compositionally biased toward acidic residues. Residues 568–588 (AGIGLLIMGFLVLGLVPFLLI) traverse the membrane as a helical segment. The Cytoplasmic portion of the chain corresponds to 589-1060 (CCDCGGAPGG…TKYSTVQYSK (472 aa)). The segment covering 792–801 (PDPDSSWPPQ) has biased composition (low complexity). The tract at residues 792–811 (PDPDSSWPPQSTEPMCPQST) is disordered. Desmoglein repeat repeat units follow at residues 835–861 (AYPSGPGVQHPLPIPDPLGYGNVTVRE), 862–891 (SYATSGTLKPSVHFHDNQQASNVVVTERVV), 892–921 (GPVPGADLHGMLEIPDLRDGTNVIVTERVI), 922–949 (APGSSLPTSLTIPNPRETSNVVVTERVI), and 950–978 (QPTSGMIGNLSMTPELSSAQNVIVTERVV).

In terms of assembly, interacts with DSC3; there is evidence to suggest that the interaction promotes cell-cell adhesion of keratinocytes. In terms of tissue distribution, expressed in epidermis.

The protein resides in the cell membrane. The protein localises to the cell junction. It is found in the desmosome. Its subcellular location is the cytoplasm. It localises to the nucleus. Its function is as follows. Component of intercellular desmosome junctions. Involved in the interaction of plaque proteins and intermediate filaments mediating cell-cell adhesion. The sequence is that of Desmoglein-1-beta (Dsg1b) from Mus musculus (Mouse).